A 393-amino-acid chain; its full sequence is NAD(P)H-quinone oxidoreductase subunit H, chloroplastic (393 aa).

Belongs to the complex I 49 kDa subunit family. In terms of assembly, NDH is composed of at least 16 different subunits, 5 of which are encoded in the nucleus.

It localises to the plastid. The protein resides in the chloroplast thylakoid membrane. The enzyme catalyses a plastoquinone + NADH + (n+1) H(+)(in) = a plastoquinol + NAD(+) + n H(+)(out). It carries out the reaction a plastoquinone + NADPH + (n+1) H(+)(in) = a plastoquinol + NADP(+) + n H(+)(out). Its function is as follows. NDH shuttles electrons from NAD(P)H:plastoquinone, via FMN and iron-sulfur (Fe-S) centers, to quinones in the photosynthetic chain and possibly in a chloroplast respiratory chain. The immediate electron acceptor for the enzyme in this species is believed to be plastoquinone. Couples the redox reaction to proton translocation, and thus conserves the redox energy in a proton gradient. This is NAD(P)H-quinone oxidoreductase subunit H, chloroplastic from Vitis vinifera (Grape).